Reading from the N-terminus, the 415-residue chain is tRNA(Met) cytidine acetate ligase (415 aa).

ATP is bound by residues 7–20 (VVEYNPFHNGHLYH), Gly101, Asn162, and 187–188 (RI).

Belongs to the TmcAL family. In terms of assembly, homodimer.

The protein resides in the cytoplasm. The enzyme catalyses cytidine(34) in elongator tRNA(Met) + acetate + ATP = N(4)-acetylcytidine(34) in elongator tRNA(Met) + AMP + diphosphate. Functionally, catalyzes the formation of N(4)-acetylcytidine (ac(4)C) at the wobble position of elongator tRNA(Met), using acetate and ATP as substrates. First activates an acetate ion to form acetyladenylate (Ac-AMP) and then transfers the acetyl group to tRNA to form ac(4)C34. In Bacillus subtilis (strain 168), this protein is tRNA(Met) cytidine acetate ligase.